The primary structure comprises 104 residues: Large ribosomal subunit protein uL24 (104 aa).

Belongs to the universal ribosomal protein uL24 family. Part of the 50S ribosomal subunit.

In terms of biological role, one of two assembly initiator proteins, it binds directly to the 5'-end of the 23S rRNA, where it nucleates assembly of the 50S subunit. One of the proteins that surrounds the polypeptide exit tunnel on the outside of the subunit. In Salmonella paratyphi A (strain ATCC 9150 / SARB42), this protein is Large ribosomal subunit protein uL24.